The primary structure comprises 91 residues: UPF0147 protein APE_2336a (91 aa).

The protein belongs to the UPF0147 family.

The sequence is that of UPF0147 protein APE_2336a from Aeropyrum pernix (strain ATCC 700893 / DSM 11879 / JCM 9820 / NBRC 100138 / K1).